Reading from the N-terminus, the 270-residue chain is Diaminopimelate epimerase (270 aa).

Residues N15, Q49, and N66 each coordinate substrate. The active-site Proton donor is C75. Residues 76–77 (GN), N155, N187, and 204–205 (ER) contribute to the substrate site. The Proton acceptor role is filled by C213. 214-215 (GS) lines the substrate pocket.

It belongs to the diaminopimelate epimerase family. In terms of assembly, homodimer.

The protein resides in the cytoplasm. The enzyme catalyses (2S,6S)-2,6-diaminopimelate = meso-2,6-diaminopimelate. It functions in the pathway amino-acid biosynthesis; L-lysine biosynthesis via DAP pathway; DL-2,6-diaminopimelate from LL-2,6-diaminopimelate: step 1/1. Its function is as follows. Catalyzes the stereoinversion of LL-2,6-diaminopimelate (L,L-DAP) to meso-diaminopimelate (meso-DAP), a precursor of L-lysine and an essential component of the bacterial peptidoglycan. The chain is Diaminopimelate epimerase from Rickettsia akari (strain Hartford).